Reading from the N-terminus, the 178-residue chain is Nicotinamide-nucleotide adenylyltransferase (178 aa).

The protein belongs to the archaeal NMN adenylyltransferase family.

It is found in the cytoplasm. It carries out the reaction beta-nicotinamide D-ribonucleotide + ATP + H(+) = diphosphate + NAD(+). It functions in the pathway cofactor biosynthesis; NAD(+) biosynthesis; NAD(+) from nicotinamide D-ribonucleotide: step 1/1. The protein is Nicotinamide-nucleotide adenylyltransferase of Thermoplasma volcanium (strain ATCC 51530 / DSM 4299 / JCM 9571 / NBRC 15438 / GSS1).